A 212-amino-acid chain; its full sequence is Uracil phosphoribosyltransferase (212 aa).

Residues Arg78, Arg103, and 130–138 (DPMLATGSS) each bind 5-phospho-alpha-D-ribose 1-diphosphate. Residues Ile193 and 198–200 (GDA) contribute to the uracil site. Asp199 contacts 5-phospho-alpha-D-ribose 1-diphosphate.

It belongs to the UPRTase family. Mg(2+) serves as cofactor.

It catalyses the reaction UMP + diphosphate = 5-phospho-alpha-D-ribose 1-diphosphate + uracil. It functions in the pathway pyrimidine metabolism; UMP biosynthesis via salvage pathway; UMP from uracil: step 1/1. Its activity is regulated as follows. Allosterically activated by GTP. Its function is as follows. Catalyzes the conversion of uracil and 5-phospho-alpha-D-ribose 1-diphosphate (PRPP) to UMP and diphosphate. The polypeptide is Uracil phosphoribosyltransferase (Pseudomonas fluorescens (strain SBW25)).